Here is a 211-residue protein sequence, read N- to C-terminus: Wound-induced protein WIN2 (211 aa).

The N-terminal stretch at 1-25 is a signal peptide; it reads MVKLSCGPILLALVLCISLTSVANA. A Chitin-binding type-1 domain is found at 26 to 68; that stretch reads QQCGRQRGGALCGNNLCCSQFGWCGSTPEYCSPSQGCQSQCTG. Intrachain disulfides connect cysteine 28/cysteine 43, cysteine 37/cysteine 49, cysteine 42/cysteine 56, and cysteine 62/cysteine 66. Positions 77-198 constitute a Barwin domain; that stretch reads GSAQNVRATY…VNYQFVNCGD (122 aa).

This Solanum tuberosum (Potato) protein is Wound-induced protein WIN2 (WIN2).